We begin with the raw amino-acid sequence, 578 residues long: Putative ankyrin repeat protein FPV022 (578 aa).

ANK repeat units lie at residues 4-34 (RRKS…DLNK), 38-67 (KNRT…KMSA), 68-97 (CKVP…SVDV), 100-129 (KGET…SGPY), 160-189 (YGHT…ITDN), 222-251 (EGTT…DPKV), 255-287 (HSVS…MVNM), 320-349 (YLSE…NINK), 353-382 (YGNI…DVNA), 386-415 (DGNT…DINS), and 419-449 (NGRT…KKNK).

The chain is Putative ankyrin repeat protein FPV022 from Fowlpox virus (strain NVSL) (FPV).